We begin with the raw amino-acid sequence, 695 residues long: Follicle-stimulating hormone receptor (695 aa).

The first 17 residues, 1 to 17 (MALLLVSLLAFMSLGSG), serve as a signal peptide directing secretion. 2 cysteine pairs are disulfide-bonded: Cys-18-Cys-25 and Cys-23-Cys-32. Residues 18-46 (CHHRLCHCSNRVFLCQESKVTEIPSDLPR) enclose the LRRNT domain. The Extracellular segment spans residues 18–366 (CHHRLCHCSN…EDIMGYNILR (349 aa)). 9 LRR repeats span residues 49 to 72 (VELR…FGDL), 73 to 97 (EKIE…LPNL), 98 to 118 (HEIR…AFQN), 119 to 143 (LPNL…KIQS), 144 to 169 (LQKV…LGLS), 170 to 192 (SESV…AFNG), 193 to 216 (TQLD…VFQG), 217 to 240 (ASGP…GLEN), and 241 to 259 (LKKL…PSLE). N-linked (GlcNAc...) asparagine glycans are attached at residues Asn-191 and Asn-199. 4 cysteine pairs are disulfide-bonded: Cys-275-Cys-346, Cys-276-Cys-292, Cys-276-Cys-356, and Cys-292-Cys-338. N-linked (GlcNAc...) asparagine glycosylation occurs at Asn-293. At Tyr-335 the chain carries Sulfotyrosine. The helical transmembrane segment at 367-387 (VLIWFISILAITGNVAVLVVL) threads the bilayer. The Cytoplasmic portion of the chain corresponds to 388 to 398 (TTSQYKLTVPR). The chain crosses the membrane as a helical span at residues 399–421 (FLMCNLAFADLCIGIYLLLIASV). Over 422–443 (DVHTRTLYHNYAIDWQTGAGCA) the chain is Extracellular. A disulfide bridge connects residues Cys-442 and Cys-517. The chain crosses the membrane as a helical span at residues 444–465 (DCWLFTVFASELSVYTLTAITL). At 466–485 (ERWHTITHAMQLDCKVQLRH) the chain is on the cytoplasmic side. A helical membrane pass occupies residues 486 to 508 (AASIMVIGWIFSSAAALFPIFGV). Topologically, residues 509-528 (SSYMKVSICLPMDIDSPLSQ) are extracellular. A helical transmembrane segment spans residues 529–550 (LYVMFLLVLNVLAFVVICGCYL). The Cytoplasmic segment spans residues 551-573 (HIYLTVRNPNIVSSASDTRIAKR). The helical transmembrane segment at 574–597 (MATLIFTDFLCMAPISFFAISASL) threads the bilayer. The Extracellular segment spans residues 598–608 (KVPLITVSKAK). The helical transmembrane segment at 609-630 (ILLVLFYPINSCANPFLYAIFT) threads the bilayer. Residues 631–695 (KNFRRDLFIL…LAPLNHLAQN (65 aa)) are Cytoplasmic-facing. The tract at residues 658-677 (TSSTAHNSHPRNGHSSSVSR) is disordered.

Belongs to the G-protein coupled receptor 1 family. FSH/LSH/TSH subfamily. Homotrimer. Functions as a homotrimer binding the FSH hormone heterodimer composed of CGA and FSHB. Interacts with ARRB2. Interacts with APPL2; interaction is independent of follicle stimulating hormone stimulation. Post-translationally, N-glycosylated; indirectly required for FSH-binding, possibly via a conformational change that allows high affinity binding of hormone. In terms of processing, sulfated.

Its subcellular location is the cell membrane. Its function is as follows. G protein-coupled receptor for follitropin, the follicle-stimulating hormone. Through cAMP production activates the downstream PI3K-AKT and ERK1/ERK2 signaling pathways. The chain is Follicle-stimulating hormone receptor (FSHR) from Cavia porcellus (Guinea pig).